A 209-amino-acid chain; its full sequence is Ribosomal RNA large subunit methyltransferase E (209 aa).

Residues glycine 63, tryptophan 65, aspartate 83, aspartate 99, and aspartate 124 each contribute to the S-adenosyl-L-methionine site. Lysine 164 serves as the catalytic Proton acceptor.

The protein belongs to the class I-like SAM-binding methyltransferase superfamily. RNA methyltransferase RlmE family.

The protein localises to the cytoplasm. It carries out the reaction uridine(2552) in 23S rRNA + S-adenosyl-L-methionine = 2'-O-methyluridine(2552) in 23S rRNA + S-adenosyl-L-homocysteine + H(+). Its function is as follows. Specifically methylates the uridine in position 2552 of 23S rRNA at the 2'-O position of the ribose in the fully assembled 50S ribosomal subunit. In Aeromonas hydrophila subsp. hydrophila (strain ATCC 7966 / DSM 30187 / BCRC 13018 / CCUG 14551 / JCM 1027 / KCTC 2358 / NCIMB 9240 / NCTC 8049), this protein is Ribosomal RNA large subunit methyltransferase E.